The chain runs to 348 residues: Dihydroorotase (348 aa).

Positions 17 and 19 each coordinate Zn(2+). Residues 19–21 (HLR) and asparagine 45 each bind substrate. Zn(2+) contacts are provided by lysine 103, histidine 140, and histidine 178. The residue at position 103 (lysine 103) is an N6-carboxylysine. Histidine 140 contributes to the substrate binding site. Leucine 223 is a substrate binding site. Aspartate 251 lines the Zn(2+) pocket. Aspartate 251 is a catalytic residue. Substrate-binding residues include histidine 255 and alanine 267.

Belongs to the metallo-dependent hydrolases superfamily. DHOase family. Class II DHOase subfamily. As to quaternary structure, homodimer. Zn(2+) is required as a cofactor.

The enzyme catalyses (S)-dihydroorotate + H2O = N-carbamoyl-L-aspartate + H(+). The protein operates within pyrimidine metabolism; UMP biosynthesis via de novo pathway; (S)-dihydroorotate from bicarbonate: step 3/3. Functionally, catalyzes the reversible cyclization of carbamoyl aspartate to dihydroorotate. The polypeptide is Dihydroorotase (Shigella sonnei (strain Ss046)).